A 412-amino-acid polypeptide reads, in one-letter code: MNQYFLLHTYFQVSRLIGLCNLHYDSSNHRFILNHVPTVVYCVILNVVYLLVLPFALFVLTGNIYHCPDAGMFGVVYNVVALTKLLTMLFLMSSVWIQRRRLYKLGNDLMKMLHKFRFNLGNDCRNRCLCKGLLTSSRFVLLTQQLLTRDSVVNCESNSSLRQAMVPYQSAAIVYALIMILLMSYVDMTVYMVEVAGNWLLVNMTQGVREMVQDLEVLPERNGIPREMGLMQILAAWRKLWRRCRRLDALLKQFVDIFQWQVLFNLLTTYIFSIAVLFRLWIYLEFDKNFHLWKGILYAIIFLTHHVEIVMQFSIFEINRCKWLGLLEDVGNLWDINYSGRQCIKSSGTILSRKLEFSLLYMNRKLQLNPKRVRRLHIVGLFDLSNLTVHNMTRSIITNVLVLCQIAYKKYG.

The next 2 helical transmembrane spans lie at 39 to 59 (VVYC…ALFV) and 72 to 92 (MFGV…LFLM). Asn-158 is a glycosylation site (N-linked (GlcNAc...) asparagine). A helical transmembrane segment spans residues 173–193 (IVYALIMILLMSYVDMTVYMV). N-linked (GlcNAc...) asparagine glycosylation occurs at Asn-203. Transmembrane regions (helical) follow at residues 224-241 (IPRE…RKLW), 262-282 (VLFN…RLWI), and 296-316 (ILYA…FSIF). N-linked (GlcNAc...) asparagine glycosylation is found at Asn-337, Asn-386, and Asn-391.

It belongs to the insect chemoreceptor superfamily. Gustatory receptor (GR) family. Gr10a subfamily.

It localises to the cell membrane. Its function is as follows. Probable gustatory receptor which mediates acceptance or avoidance behavior, depending on its substrates. This is Putative gustatory receptor 58c (Gr58c) from Drosophila melanogaster (Fruit fly).